The sequence spans 90 residues: SAGA-associated factor 11 (90 aa).

An SGF11-type zinc finger spans residues 63 to 84 (FSCDNCGRKIAGGRFAQHINKC).

This sequence belongs to the SGF11 family. As to quaternary structure, component of the 1.8 MDa SAGA transcription coactivator-HAT complex. SAGA is built of 5 distinct domains with specialized functions. Within the SAGA complex, SUS1, SGF11, SGF73 and UBP8 form an additional subcomplex of SAGA called the DUB module (deubiquitination module). Interacts directly with SGF73, SUS1 and UBP8.

It is found in the nucleus. Functionally, functions as a component of the transcription regulatory histone acetylation (HAT) complex SAGA. At the promoters, SAGA is required for recruitment of the basal transcription machinery. It influences RNA polymerase II transcriptional activity through different activities such as TBP interaction and promoter selectivity, interaction with transcription activators, and chromatin modification through histone acetylation and deubiquitination. SAGA acetylates nucleosomal histone H3 to some extent (to form H3K9ac, H3K14ac, H3K18ac and H3K23ac). SAGA interacts with DNA via upstream activating sequences (UASs). Involved in transcriptional regulation of a subset of SAGA-regulated genes. Within the SAGA complex, participates in a subcomplex, that specifically deubiquitinates histones H2B. The chain is SAGA-associated factor 11 from Lodderomyces elongisporus (strain ATCC 11503 / CBS 2605 / JCM 1781 / NBRC 1676 / NRRL YB-4239) (Yeast).